The following is a 277-amino-acid chain: NAD kinase (277 aa).

Aspartate 67 serves as the catalytic Proton acceptor. NAD(+)-binding positions include aspartate 67 to glycine 68, arginine 72, asparagine 137 to glutamate 138, lysine 148, arginine 165, aspartate 167, threonine 178 to serine 183, leucine 202, and glutamine 236.

It belongs to the NAD kinase family. A divalent metal cation is required as a cofactor.

It localises to the cytoplasm. The catalysed reaction is NAD(+) + ATP = ADP + NADP(+) + H(+). In terms of biological role, involved in the regulation of the intracellular balance of NAD and NADP, and is a key enzyme in the biosynthesis of NADP. Catalyzes specifically the phosphorylation on 2'-hydroxyl of the adenosine moiety of NAD to yield NADP. In Pyrococcus furiosus (strain ATCC 43587 / DSM 3638 / JCM 8422 / Vc1), this protein is NAD kinase.